A 317-amino-acid chain; its full sequence is Protein-L-isoaspartate O-methyltransferase (317 aa).

The active site involves serine 59.

Belongs to the methyltransferase superfamily. L-isoaspartyl/D-aspartyl protein methyltransferase family. In terms of assembly, monomer.

It localises to the cytoplasm. The catalysed reaction is [protein]-L-isoaspartate + S-adenosyl-L-methionine = [protein]-L-isoaspartate alpha-methyl ester + S-adenosyl-L-homocysteine. Functionally, catalyzes the methyl esterification of L-isoaspartyl residues in peptides and proteins that result from spontaneous decomposition of normal L-aspartyl and L-asparaginyl residues. It plays a role in the repair and/or degradation of damaged proteins. The chain is Protein-L-isoaspartate O-methyltransferase (pcm) from Thermotoga maritima (strain ATCC 43589 / DSM 3109 / JCM 10099 / NBRC 100826 / MSB8).